The following is a 314-amino-acid chain: Polyamine aminopropyltransferase (314 aa).

Residues 4–241 form the PABS domain; sequence GMYFFEHVTP…LNFGFLLASD (238 aa). Gln-33 contributes to the S-methyl-5'-thioadenosine binding site. Residues His-64 and Glu-88 each contribute to the spermidine site. Residues Asp-108 and 140-141 contribute to the S-methyl-5'-thioadenosine site; that span reads DA. Asp-158 (proton acceptor) is an active-site residue. An S-methyl-5'-thioadenosine-binding site is contributed by Pro-168.

It belongs to the spermidine/spermine synthase family. Homodimer or homotetramer.

The protein resides in the cytoplasm. It carries out the reaction S-adenosyl 3-(methylsulfanyl)propylamine + putrescine = S-methyl-5'-thioadenosine + spermidine + H(+). The protein operates within amine and polyamine biosynthesis; spermidine biosynthesis; spermidine from putrescine: step 1/1. Its function is as follows. Catalyzes the irreversible transfer of a propylamine group from the amino donor S-adenosylmethioninamine (decarboxy-AdoMet) to putrescine (1,4-diaminobutane) to yield spermidine. The protein is Polyamine aminopropyltransferase of Thermus thermophilus (strain ATCC BAA-163 / DSM 7039 / HB27).